A 430-amino-acid chain; its full sequence is Potassium channel subfamily K member 12 (430 aa).

Residues 1-38 (MSSRSPRPPPRRSRRRLPRPSCCCCCCRRSHLNEDTGR) are Cytoplasmic-facing. The segment at 11 to 16 (RRSRRR) is ER retention/retrieval signal. A helical transmembrane segment spans residues 39-59 (FVLLAALIGLYLVAGATVFSA). The N-linked (GlcNAc...) asparagine glycan is linked to Asn78. The pore-forming intramembrane region spans 114 to 134 (WDFPGAFYFVGTVVSTIGFGM). K(+) contacts are provided by Thr129, Ile130, and Gly131. Residues 129–134 (TIGFGM) are selectivity filter 1. Residues 145-165 (FLIAYGLFGCAGTILFFNLFL) traverse the membrane as a helical segment. Over 166 to 212 (ERIISLLAFIMRACRERQLRRSGLLPATFRRGSALSEADSLAGWKPS) the chain is Cytoplasmic. Residues 213 to 233 (VYHVLLILGLFAVLLSCCASA) form a helical membrane-spanning segment. Positions 243–263 (YVDSLYFCFVTFSTIGFGDLV) form an intramembrane region, pore-forming. 4 residues coordinate K(+): Thr256, Ile257, Gly258, and Phe259. A selectivity filter 2 region spans residues 256–261 (TIGFGD). Residues 282–302 (LFILLGVCCIYSLFNVISILI) form a helical membrane-spanning segment. The Cytoplasmic portion of the chain corresponds to 303 to 430 (KQVLNWMLRK…NRLAETSASR (128 aa)).

It belongs to the two pore domain potassium channel (TC 1.A.1.8) family. As to quaternary structure, homodimer. Heterodimer with KCNK13.

Its subcellular location is the cell membrane. It localises to the endoplasmic reticulum membrane. The catalysed reaction is K(+)(in) = K(+)(out). Its function is as follows. K(+) channel subunit that may homo- and heterodimerize to form functional channels with distinct regulatory and gating properties. Can heterodimerize with KCNK13 subunit to conduct K(+) outward rectifying currents at the plasma membrane. The homodimers are mainly retained in the endoplasmic reticulum compartment and may be targeted to the cell surface upon phosphorylation or other activation signals yet to be elucidated. The sequence is that of Potassium channel subfamily K member 12 from Homo sapiens (Human).